We begin with the raw amino-acid sequence, 29 residues long: Omega-conotoxin MVIIC (29 aa).

The propeptide occupies 1-2 (TR). Intrachain disulfides connect C3–C18, C10–C22, and C17–C28. C28 is subject to Cysteine amide.

This sequence belongs to the conotoxin O1 superfamily. Not hydroxylated; hydroxylation, on a synthetic hydroxylated MVIIC, has a significant impact on the oxidative folding but not on the biological activity. Expressed by the venom duct.

The protein resides in the secreted. Its function is as follows. Omega-conotoxins act at presynaptic membranes, they bind and block voltage-gated calcium channels (Cav). This toxin preferentially blocks P/Q-type calcium channels (Cav2.1/CACNA1A) (IC(50)=0.60 nM). Also shows an inhibition on Cav2.2/CACNA1A channels (IC(50)=7.0 nM). In Conus magus (Magical cone), this protein is Omega-conotoxin MVIIC.